Consider the following 519-residue polypeptide: 3-octaprenyl-4-hydroxybenzoate carboxy-lyase (519 aa).

Mn(2+) is bound at residue Asn177. Prenylated FMN-binding positions include 180 to 182 (IYR), 194 to 196 (RWL), and 199 to 200 (RG). Glu243 provides a ligand contact to Mn(2+). Asp318 serves as the catalytic Proton donor.

This sequence belongs to the UbiD family. In terms of assembly, homohexamer. Prenylated FMN is required as a cofactor. Requires Mn(2+) as cofactor.

It localises to the cell membrane. The catalysed reaction is a 4-hydroxy-3-(all-trans-polyprenyl)benzoate + H(+) = a 2-(all-trans-polyprenyl)phenol + CO2. Its pathway is cofactor biosynthesis; ubiquinone biosynthesis. Catalyzes the decarboxylation of 3-octaprenyl-4-hydroxy benzoate to 2-octaprenylphenol, an intermediate step in ubiquinone biosynthesis. This Burkholderia mallei (strain ATCC 23344) protein is 3-octaprenyl-4-hydroxybenzoate carboxy-lyase.